Here is a 373-residue protein sequence, read N- to C-terminus: 3-dehydroquinate synthase (373 aa).

Residues Asp-74–Lys-79, Gly-108–Asp-112, Thr-132–Thr-133, Lys-145, Lys-154, and Thr-172–Thr-175 contribute to the NAD(+) site. Zn(2+) is bound by residues Glu-187, His-250, and His-266.

This sequence belongs to the sugar phosphate cyclases superfamily. Dehydroquinate synthase family. Co(2+) serves as cofactor. Zn(2+) is required as a cofactor. Requires NAD(+) as cofactor.

It is found in the cytoplasm. It carries out the reaction 7-phospho-2-dehydro-3-deoxy-D-arabino-heptonate = 3-dehydroquinate + phosphate. It participates in metabolic intermediate biosynthesis; chorismate biosynthesis; chorismate from D-erythrose 4-phosphate and phosphoenolpyruvate: step 2/7. Functionally, catalyzes the conversion of 3-deoxy-D-arabino-heptulosonate 7-phosphate (DAHP) to dehydroquinate (DHQ). In Nocardia farcinica (strain IFM 10152), this protein is 3-dehydroquinate synthase.